Reading from the N-terminus, the 310-residue chain is DnaJ-like protein MG002 (310 aa).

In terms of domain architecture, J spans 1–66 (MNLYDLLELP…KEKYDSMLKV (66 aa)).

In Mycoplasma genitalium (strain ATCC 33530 / DSM 19775 / NCTC 10195 / G37) (Mycoplasmoides genitalium), this protein is DnaJ-like protein MG002.